The chain runs to 340 residues: rRNA adenine N-6-methyltransferase (340 aa).

The span at methionine 1–arginine 25 shows a compositional bias: low complexity. Residues methionine 1–glutamine 37 form a disordered region. S-adenosyl-L-methionine contacts are provided by asparagine 38, leucine 40, glycine 65, glutamate 86, aspartate 111, and alanine 127. Positions arginine 284–alanine 340 are disordered. Gly residues predominate over residues proline 301–glycine 314. The segment covering proline 315 to glycine 329 has biased composition (basic and acidic residues).

This sequence belongs to the class I-like SAM-binding methyltransferase superfamily. rRNA adenine N(6)-methyltransferase family.

In terms of biological role, involved in erythromycin resistance. This Aeromicrobium erythreum (strain ATCC 51598 / DSM 8599 / JCM 8359 / NBRC 15406 / NRRL B-3381) protein is rRNA adenine N-6-methyltransferase (ermA).